The chain runs to 24 residues: Frenatin-4 (24 aa).

In terms of tissue distribution, expressed by the skin glands.

Its subcellular location is the secreted. Functionally, very weak antimicrobial peptide since it does not show activity below 100 ug/ml against Bacillus cereus, Escherichia coli, Leuconostoc mesenteroides, Micrococcus luteus, Pastewella haemolytica, Staphylococcus aureus, Streptococcus faecalis and Streptococcus uberis. The polypeptide is Frenatin-4 (Nyctimystes infrafrenatus (White-lipped tree frog)).